The following is a 430-amino-acid chain: Aspartate aminotransferase, mitochondrial (430 aa).

The N-terminal 29 residues, 1–29, are a transit peptide targeting the mitochondrion; sequence MALLHSARVLSGVASAFHPGLAAAASARA. A Phosphothreonine modification is found at T48. Position 59 is an N6-acetyllysine (K59). A substrate-binding site is contributed by G65. K73 is modified (N6-acetyllysine; alternate). At K73 the chain carries N6-succinyllysine; alternate. K82 bears the N6-acetyllysine mark. An N6-acetyllysine; alternate modification is found at K90. K90 is subject to N6-succinyllysine; alternate. Position 96 is a 3'-nitrotyrosine; alternate (Y96). Y96 is subject to Phosphotyrosine; alternate. At K122 the chain carries N6-acetyllysine; alternate. The residue at position 122 (K122) is an N6-succinyllysine; alternate. Residue S143 is modified to Phosphoserine. At K159 the chain carries N6-acetyllysine; alternate. N6-succinyllysine; alternate is present on K159. W162 contacts substrate. K185 bears the N6-acetyllysine; alternate mark. Position 185 is an N6-succinyllysine; alternate (K185). N215 provides a ligand contact to substrate. The residue at position 227 (K227) is an N6-succinyllysine. N6-acetyllysine is present on K234. N6-acetyllysine; alternate occurs at positions 279 and 296. Position 279 is an N6-(pyridoxal phosphate)lysine; alternate (K279). The residue at position 296 (K296) is an N6-succinyllysine; alternate. K302 is subject to N6-acetyllysine. Residue K309 is modified to N6-acetyllysine; alternate. The residue at position 309 (K309) is an N6-succinyllysine; alternate. The residue at position 313 (R313) is an Asymmetric dimethylarginine. At K338 the chain carries N6-acetyllysine; alternate. At K338 the chain carries N6-succinyllysine; alternate. K345 carries the post-translational modification N6-acetyllysine. K363 is modified (N6-acetyllysine; alternate). An N6-succinyllysine; alternate modification is found at K363. 2 positions are modified to N6-acetyllysine: K364 and K387. K396 and K404 each carry N6-acetyllysine; alternate. K396 and K404 each carry N6-succinyllysine; alternate. Residue R407 coordinates substrate.

The protein belongs to the class-I pyridoxal-phosphate-dependent aminotransferase family. Homodimer. It depends on pyridoxal 5'-phosphate as a cofactor.

Its subcellular location is the mitochondrion matrix. It localises to the cell membrane. It catalyses the reaction L-aspartate + 2-oxoglutarate = oxaloacetate + L-glutamate. It carries out the reaction L-kynurenine + 2-oxoglutarate = kynurenate + L-glutamate + H2O. Functionally, catalyzes the irreversible transamination of the L-tryptophan metabolite L-kynurenine to form kynurenic acid (KA). As a member of the malate-aspartate shuttle, it has a key role in the intracellular NAD(H) redox balance. Is important for metabolite exchange between mitochondria and cytosol, and for amino acid metabolism. Facilitates cellular uptake of long-chain free fatty acids. This is Aspartate aminotransferase, mitochondrial (GOT2) from Oryctolagus cuniculus (Rabbit).